Consider the following 862-residue polypeptide: Cone cGMP-specific 3',5'-cyclic phosphodiesterase subunit alpha' (862 aa).

GAF domains are found at residues 75-224 and 256-433; these read SMEK…SLVL and DIER…GWSV. 3',5'-cyclic GMP-binding positions include Ser97, Asn116, 169 to 172, and Thr176; that span reads DKKT. Positions 486 to 819 constitute a PDEase domain; that stretch reads DEKDLIRILK…VEWKTRADEY (334 aa). His562 functions as the Proton donor in the catalytic mechanism. 4 residues coordinate a divalent metal cation: His566, His602, Asp603, and Asp723. Residues 830 to 842 show a composition bias toward basic and acidic residues; it reads KKKEEEAAAKKAE. Positions 830–862 are disordered; the sequence is KKKEEEAAAKKAENAAGGGGGGEDGKSKTCIVL. Residue Cys859 is modified to Cysteine methyl ester. Cys859 carries the S-geranylgeranyl cysteine lipid modification. Residues 860–862 constitute a propeptide, removed in mature form; that stretch reads IVL.

It belongs to the cyclic nucleotide phosphodiesterase family. In terms of assembly, composed of two alpha' subunits that are associated with 3 smaller proteins of 11, 13, and 15 kDa. A divalent metal cation serves as cofactor.

Its subcellular location is the cell membrane. The catalysed reaction is 3',5'-cyclic GMP + H2O = GMP + H(+). As cone-specific cGMP phosphodiesterase, it plays an essential role in light detection and cone phototransduction by rapidly decreasing intracellular levels of cGMP. The polypeptide is Cone cGMP-specific 3',5'-cyclic phosphodiesterase subunit alpha' (PDE6C) (Gallus gallus (Chicken)).